The chain runs to 163 residues: Phosphopantetheine adenylyltransferase (163 aa).

Ser10 lines the substrate pocket. Residues 10–11 and His18 contribute to the ATP site; that span reads SF. Positions 42, 74, and 88 each coordinate substrate. Residues 89 to 91, Glu99, and 124 to 130 each bind ATP; these read GLR and YSFLSSS.

This sequence belongs to the bacterial CoaD family. In terms of assembly, homohexamer. Requires Mg(2+) as cofactor.

Its subcellular location is the cytoplasm. It catalyses the reaction (R)-4'-phosphopantetheine + ATP + H(+) = 3'-dephospho-CoA + diphosphate. The protein operates within cofactor biosynthesis; coenzyme A biosynthesis; CoA from (R)-pantothenate: step 4/5. In terms of biological role, reversibly transfers an adenylyl group from ATP to 4'-phosphopantetheine, yielding dephospho-CoA (dPCoA) and pyrophosphate. This Bacillus anthracis (strain A0248) protein is Phosphopantetheine adenylyltransferase.